The sequence spans 180 residues: Ribonuclease M5 (180 aa).

The Toprim domain occupies 5-90 (KQIIIVEGKT…NAFIKKDDIS (86 aa)). The Mg(2+) site is built by glutamate 11, aspartate 59, and aspartate 61.

Belongs to the ribonuclease M5 family. Mg(2+) is required as a cofactor.

The protein localises to the cytoplasm. The enzyme catalyses Endonucleolytic cleavage of RNA, removing 21 and 42 nucleotides, respectively, from the 5'- and 3'-termini of a 5S-rRNA precursor.. In terms of biological role, required for correct processing of both the 5' and 3' ends of 5S rRNA precursor. Cleaves both sides of a double-stranded region yielding mature 5S rRNA in one step. This chain is Ribonuclease M5, found in Mycoplasma capricolum subsp. capricolum (strain California kid / ATCC 27343 / NCTC 10154).